Consider the following 161-residue polypeptide: MKRVNFTISGHGYILIKPNYPDHFNYRLPADMKFYKCVLTINYISVSSMSGPFTGPYEKYSSGYFSEFGPQHLFSINRYHGLRFSRQSSQEYDSVGHILYSPITYYVSGAEHVTMDSIDQRREFQDSIYTHDSSDSENIMSDSSQSECDYADLMINLDKLI.

This is an uncharacterized protein from Schizosaccharomyces pombe (strain 972 / ATCC 24843) (Fission yeast).